The primary structure comprises 283 residues: MDDSLRVSILSEALPYIQSFSGRKIVVKYGGSIMEDEKLKKAFFRDIALLSSVGVCPVVIHGGGPEINRWLSKLEISPKFEKGLRVTDDKTMEIVEMVLMGRVNKQIVRGINKTGSLAVGISGLDGNLIQSRELGDGSHGLVGEVTQINPELLEPLIAKGYIPVISSIGSTTDGISHNINADFVAGELAAAINAEKLILLTDTPGILKERNNPNSLAKQINLKEARKFIEKNIVSNGMLPKTECCIRALAQGVRAAHIIDGRIEHSLLLEIFTNSGIGTMINA.

Residues 63–64, R85, and N178 each bind substrate; that span reads GG.

This sequence belongs to the acetylglutamate kinase family. ArgB subfamily.

The protein resides in the cytoplasm. The enzyme catalyses N-acetyl-L-glutamate + ATP = N-acetyl-L-glutamyl 5-phosphate + ADP. It functions in the pathway amino-acid biosynthesis; L-arginine biosynthesis; N(2)-acetyl-L-ornithine from L-glutamate: step 2/4. In terms of biological role, catalyzes the ATP-dependent phosphorylation of N-acetyl-L-glutamate. The protein is Acetylglutamate kinase of Prochlorococcus marinus (strain MIT 9515).